Consider the following 1184-residue polypeptide: DNA-directed RNA polymerase subunit beta (1184 aa).

The tract at residues 1160–1184 is disordered; it reads DDDFTNQNDAFNIVQPENAAAEKTE.

The protein belongs to the RNA polymerase beta chain family. As to quaternary structure, the RNAP catalytic core consists of 2 alpha, 1 beta, 1 beta' and 1 omega subunit. When a sigma factor is associated with the core the holoenzyme is formed, which can initiate transcription.

The catalysed reaction is RNA(n) + a ribonucleoside 5'-triphosphate = RNA(n+1) + diphosphate. In terms of biological role, DNA-dependent RNA polymerase catalyzes the transcription of DNA into RNA using the four ribonucleoside triphosphates as substrates. The sequence is that of DNA-directed RNA polymerase subunit beta from Listeria monocytogenes serotype 4b (strain F2365).